The sequence spans 284 residues: Pseudomurein endoisopeptidase PeiW (284 aa).

4 pseudomurein-binding repeat regions span residues 4-31 (GLNEFLDMKKRYEDFKMKNKREPRYVTT), 34-65 (GYKVMLPVFKDMLRRYEDFVRINGREPNYISI), 70-100 (NGKIEIKKFRDMLRRYEDFVRINGREPNIIY), and 106-137 (SDHVSLGTFKDMLRRYKDFVRINGREPNYISI). Active-site residues include cysteine 198, histidine 233, and aspartate 250.

This sequence belongs to the Psimunavirus Pseudomurein endoisopeptidase family. As to quaternary structure, monomer. The cofactor is Ca(2+). Requires Mg(2+) as cofactor.

Cysteine protease that cleaves the cell wall of its host methanogen under hydrogen limitation of the latter (autolysis). Cleaves the epsilon-Ala-Lys isopeptide bond in the oligopeptides of pseudomurein. The polypeptide is Pseudomurein endoisopeptidase PeiW (peiW) (Methanothermobacter phage psiM100).